Here is a 203-residue protein sequence, read N- to C-terminus: Thymidylate kinase (203 aa).

Residue 14-21 (GGEGSGKS) participates in ATP binding.

It belongs to the thymidylate kinase family.

It carries out the reaction dTMP + ATP = dTDP + ADP. In terms of biological role, phosphorylation of dTMP to form dTDP in both de novo and salvage pathways of dTTP synthesis. The polypeptide is Thymidylate kinase (Rickettsia canadensis (strain McKiel)).